A 244-amino-acid chain; its full sequence is 14-3-3 protein homolog 1 (244 aa).

This sequence belongs to the 14-3-3 family.

The protein is 14-3-3 protein homolog 1 of Echinococcus multilocularis (Fox tapeworm).